The following is a 451-amino-acid chain: Pre-mRNA-splicing factor PRP46 (451 aa).

7 WD repeats span residues 137–168, 180–210, 222–252, 264–294, 306–335, 348–377, and 397–427; these read GHLGWVRCVAIDPVDNEWFITGSNDTTMKVWD, GHVMTVRDVAVSDRHPYLFSVSEDKTVKCWD, GHLSGVRTVSIHPTLDLIATAGRDSVIKLWD, GHKGPINQVQCTPVDPQVVSSSTDATVRLWD, HHKRSVRATALHPKEFSVASACTDDIRSWG, EKTGIINTLSINQDDVLFAGGDNGVLSFYD, and EGERSVLCSTFDKTGLRLITGEADKSIKIWK.

The protein belongs to the WD repeat PRL1/PRL2 family. In terms of assembly, belongs to the CWC complex (or CEF1-associated complex), a spliceosome subcomplex composed of the U2, U5 and U6 snRNAs and at least BUD13, BUD31, BRR2, CDC40, CEF1, CLF1, CUS1, CWC2, CWC15, CWC21, CWC22, CWC23, CWC24, CWC25, CWC27, ECM2, HSH155, IST3, ISY1, LEA1, MSL1, NTC20, PRP8, PRP9, PRP11, PRP19, PRP21, PRP22, PRP45, PRP46, SLU7, SMB1, SMD1, SMD2, SMD3, SMX2, SMX3, SNT309, SNU114, SPP2, SYF1, SYF2, RSE1 and YJU2. Interacts with CEF1, CLF1, NTC20, PRP45 and SYF1.

The protein localises to the cytoplasm. Its subcellular location is the nucleus. Its function is as follows. Involved in pre-mRNA splicing. May also be required for cell cycle progression at G2/M. The protein is Pre-mRNA-splicing factor PRP46 (PRP46) of Saccharomyces cerevisiae (strain ATCC 204508 / S288c) (Baker's yeast).